Consider the following 228-residue polypeptide: Cutinase CUT1 (228 aa).

Residues 1–16 form the signal peptide; sequence MQFITVALTLIALASA. C49 and C127 are joined by a disulfide. S138 (nucleophile) is an active-site residue. C189 and C196 are oxidised to a cystine. N190 carries an N-linked (GlcNAc...) asparagine glycan. Residue D193 is part of the active site. The Proton donor/acceptor role is filled by H206.

The protein belongs to the cutinase family. In terms of processing, the 2 disulfide bonds play a critical role in holding the catalytic residues in juxta-position; reduction of the disulfide bridges results in the complete inactivation of the enzyme.

Its subcellular location is the secreted. The enzyme catalyses cutin + H2O = cutin monomers.. Functionally, catalyzes the hydrolysis of complex carboxylic polyesters found in the cell wall of plants. Degrades cutin, a macromolecule that forms the structure of the plant cuticle. Required for efficient penetration of the host plant cuticle by the appressorium during the initial stage of fungal infection. The sequence is that of Cutinase CUT1 from Pyricularia oryzae (strain 70-15 / ATCC MYA-4617 / FGSC 8958) (Rice blast fungus).